A 494-amino-acid chain; its full sequence is MGSTSSLYAAIDLGSNSFHMLVVREVAGSIQTLTRIKRKVRLAAGLNSENALSNEAMERGWQCLRLFAERLQDIPPSQIRVVATATLRLAVNAGDFIAKAQEILGCPVQVISGEEEARLIYQGVAHTTGGADQRLVVDIGGASTELVTGTGAQTTSLFSLSMGCVTWLERYFADRNLGQENFDAAEKAAREVLRPVADELRYHGWKVCVGASGTVQALQEIMMAQGMDERITLEKLQQLKQRAIHCGRLEELEIDGLTLERALVFPSGLAILIAIFTELNIQCMTLAGGALREGLVYGMLHLTVEQDIRSRTLRNIQRRFMIDIDQAQRVAKVAANFFDQVENEWHLEAISRDLLISACQLHEIGLSVDFKQAPQHAAYLVRNLDLPGFTPAQKKLLATLLLNQTNPVDLSSLHQQNAVPPRVAEQLCRLLRLAIIFASRRRDDLVPEMTLQANHELLTLTLPQGWLTQHPLGKEIIDQESQWQSYVHWPLEVH.

It belongs to the GppA/Ppx family. GppA subfamily.

The enzyme catalyses guanosine 3'-diphosphate 5'-triphosphate + H2O = guanosine 3',5'-bis(diphosphate) + phosphate + H(+). Its pathway is purine metabolism; ppGpp biosynthesis; ppGpp from GTP: step 2/2. Catalyzes the conversion of pppGpp to ppGpp. Guanosine pentaphosphate (pppGpp) is a cytoplasmic signaling molecule which together with ppGpp controls the 'stringent response', an adaptive process that allows bacteria to respond to amino acid starvation, resulting in the coordinated regulation of numerous cellular activities. The sequence is that of Guanosine-5'-triphosphate,3'-diphosphate pyrophosphatase from Escherichia coli O127:H6 (strain E2348/69 / EPEC).